Consider the following 664-residue polypeptide: Zinc finger protein 710 (664 aa).

Residues lysine 110 and lysine 113 each participate in a glycyl lysine isopeptide (Lys-Gly) (interchain with G-Cter in SUMO2) cross-link. Positions 121 to 141 are disordered; that stretch reads VYEVSVPGDDKDAGPAEAPAE. 3 C2H2-type zinc fingers span residues 295 to 317, 323 to 345, and 351 to 373; these read WQCR…ILGH, HSCP…LLTH, and HKCQ…MLLH. A Glycyl lysine isopeptide (Lys-Gly) (interchain with G-Cter in SUMO2) cross-link involves residue lysine 377. 8 C2H2-type zinc fingers span residues 379-401, 407-429, 435-457, 463-485, 491-513, 519-541, 547-569, and 575-598; these read YSCH…EVKH, HVCV…LASH, YQCL…MLKH, FVCT…SLTH, FKCE…MLIH, YQCH…MIVH, FKCK…MHLH, and FKCP…KVKH.

It belongs to the krueppel C2H2-type zinc-finger protein family.

The protein localises to the nucleus. In terms of biological role, may be involved in transcriptional regulation. In Homo sapiens (Human), this protein is Zinc finger protein 710 (ZNF710).